The chain runs to 557 residues: Jerky protein (557 aa).

The 52-residue stretch at 11 to 62 (KGEKRKRVVLTLKEKIDICTRLERGESRKALMQEYNVGMSTLYDIKAHKAQL) folds into the HTH psq-type domain. DNA-binding regions (H-T-H motif) lie at residues 38-58 (RKAL…IKAH) and 110-142 (PMLI…FKAR). In terms of domain architecture, HTH CENPB-type spans 77–149 (QRRTLHTPKL…KARHGIKKLD (73 aa)). One can recognise a DDE-1 domain in the interval 213–382 (KDRLTVLMCA…VPSQVFQRAW (170 aa)).

The protein belongs to the tigger transposable element derived protein family. In terms of tissue distribution, brain; highest in the temporal and brainstem regions.

The protein resides in the nucleus. In terms of biological role, may bind DNA. The chain is Jerky protein from Mus musculus (Mouse).